The primary structure comprises 206 residues: LexA repressor (206 aa).

The segment at residues 28–48 (VREIGQAVGLASSSTVHGHLS) is a DNA-binding region (H-T-H motif). Catalysis depends on for autocatalytic cleavage activity residues Ser-128 and Lys-166.

It belongs to the peptidase S24 family. Homodimer.

The enzyme catalyses Hydrolysis of Ala-|-Gly bond in repressor LexA.. Functionally, represses a number of genes involved in the response to DNA damage (SOS response), including recA and lexA. In the presence of single-stranded DNA, RecA interacts with LexA causing an autocatalytic cleavage which disrupts the DNA-binding part of LexA, leading to derepression of the SOS regulon and eventually DNA repair. The protein is LexA repressor of Bacillus thuringiensis (strain Al Hakam).